A 446-amino-acid chain; its full sequence is RUN domain-containing protein 3A (446 aa).

Residues 1–298 (MEASFVQTTM…LQLQLEEAAA (298 aa)) are interaction with RAP2A. Residues 52-189 (DDSSEEFVNF…IDFSFCLKGE (138 aa)) enclose the RUN domain. A Phosphothreonine modification is found at T215. Residues 216 to 239 (DEEERHSAESSTSEDNSPEHPYLP) are disordered. S232 carries the phosphoserine modification. The stretch at 267 to 322 (YLEELVRLRESQLKDLEAENRRLQLQLEEAAAQNQREKRELEGVILELQEQLTGLI) forms a coiled coil. A compositionally biased stretch (polar residues) spans 372–384 (PLSAEASLSSDSQ). The tract at residues 372-403 (PLSAEASLSSDSQRLGEAKRDEEPWGPIGKDP) is disordered. A compositionally biased stretch (basic and acidic residues) spans 385 to 394 (RLGEAKRDEE). Residues S416 and S419 each carry the phosphoserine modification.

This sequence belongs to the RUNDC3 family. In terms of assembly, interacts with the GTP-bound form of RAP2A. As to expression, brain.

May act as an effector of RAP2A in neuronal cells. The chain is RUN domain-containing protein 3A (Rundc3a) from Mus musculus (Mouse).